The following is a 255-amino-acid chain: UPF0246 protein BVU_0413 (255 aa).

The protein belongs to the UPF0246 family.

In Phocaeicola vulgatus (strain ATCC 8482 / DSM 1447 / JCM 5826 / CCUG 4940 / NBRC 14291 / NCTC 11154) (Bacteroides vulgatus), this protein is UPF0246 protein BVU_0413.